Here is a 351-residue protein sequence, read N- to C-terminus: Phosphoribosylformylglycinamidine cyclo-ligase (351 aa).

This sequence belongs to the AIR synthase family.

It localises to the cytoplasm. It carries out the reaction 2-formamido-N(1)-(5-O-phospho-beta-D-ribosyl)acetamidine + ATP = 5-amino-1-(5-phospho-beta-D-ribosyl)imidazole + ADP + phosphate + H(+). It functions in the pathway purine metabolism; IMP biosynthesis via de novo pathway; 5-amino-1-(5-phospho-D-ribosyl)imidazole from N(2)-formyl-N(1)-(5-phospho-D-ribosyl)glycinamide: step 2/2. This is Phosphoribosylformylglycinamidine cyclo-ligase from Burkholderia pseudomallei (strain 668).